Reading from the N-terminus, the 377-residue chain is Succinyl-diaminopimelate desuccinylase (377 aa).

His68 contacts Zn(2+). Asp70 is a catalytic residue. Asp101 lines the Zn(2+) pocket. Glu135 serves as the catalytic Proton acceptor. Residues Glu136, Glu164, and His350 each coordinate Zn(2+).

The protein belongs to the peptidase M20A family. DapE subfamily. As to quaternary structure, homodimer. Zn(2+) serves as cofactor. The cofactor is Co(2+).

It catalyses the reaction N-succinyl-(2S,6S)-2,6-diaminopimelate + H2O = (2S,6S)-2,6-diaminopimelate + succinate. It functions in the pathway amino-acid biosynthesis; L-lysine biosynthesis via DAP pathway; LL-2,6-diaminopimelate from (S)-tetrahydrodipicolinate (succinylase route): step 3/3. In terms of biological role, catalyzes the hydrolysis of N-succinyl-L,L-diaminopimelic acid (SDAP), forming succinate and LL-2,6-diaminopimelate (DAP), an intermediate involved in the bacterial biosynthesis of lysine and meso-diaminopimelic acid, an essential component of bacterial cell walls. This chain is Succinyl-diaminopimelate desuccinylase, found in Vibrio vulnificus (strain CMCP6).